The sequence spans 313 residues: Pseudouridine-5'-phosphate glycosidase (313 aa).

Glu-34 serves as the catalytic Proton donor. Positions 95 and 115 each coordinate substrate. Asp-147 provides a ligand contact to Mn(2+). 149-151 (SAD) provides a ligand contact to substrate. Lys-168 (nucleophile) is an active-site residue.

This sequence belongs to the pseudouridine-5'-phosphate glycosidase family. As to quaternary structure, homotrimer. Mn(2+) serves as cofactor.

It carries out the reaction D-ribose 5-phosphate + uracil = psi-UMP + H2O. Its function is as follows. Catalyzes the reversible cleavage of pseudouridine 5'-phosphate (PsiMP) to ribose 5-phosphate and uracil. Functions biologically in the cleavage direction, as part of a pseudouridine degradation pathway. The chain is Pseudouridine-5'-phosphate glycosidase from Deinococcus radiodurans (strain ATCC 13939 / DSM 20539 / JCM 16871 / CCUG 27074 / LMG 4051 / NBRC 15346 / NCIMB 9279 / VKM B-1422 / R1).